The chain runs to 92 residues: Envelope glycoprotein J (92 aa).

An N-terminal signal peptide occupies residues methionine 1 to alanine 22. The Extracellular portion of the chain corresponds to alanine 23–glycine 49. Asparagine 33 carries N-linked (GlcNAc...) asparagine; by host glycosylation. Residues phenylalanine 50–leucine 70 traverse the membrane as a helical segment. The Cytoplasmic portion of the chain corresponds to glutamate 71–proline 92.

The protein belongs to the alphaherpesvirinae glycoprotein J family.

It localises to the host Golgi apparatus membrane. It is found in the host endoplasmic reticulum membrane. The protein localises to the host endosome membrane. Its function is as follows. Functions as an activator of viral protein expression and virus production. In turn, promotes cell-to-cell spread as well as syncytia formation. The chain is Envelope glycoprotein J (gJ) from Homo sapiens (Human).